The following is a 473-amino-acid chain: Gamma-aminobutyric acid receptor subunit beta-3 (473 aa).

A signal peptide spans 1–25 (MWGLAGGRLFGIFSAPVLVAVVCCA). At 26-246 (QSVNDPGNMS…FRLKRNIGYF (221 aa)) the chain is on the extracellular side. Asn-33 and Asn-105 each carry an N-linked (GlcNAc...) asparagine glycan. A benzamidine-binding site is contributed by 120 to 122 (DTY). Tyr-122 contacts 4-aminobutanoate. Tyr-122 is a histamine binding site. A disulfide bond links Cys-161 and Cys-175. Asn-174 carries N-linked (GlcNAc...) asparagine glycosylation. 4-aminobutanoate contacts are provided by Glu-180 and Tyr-182. Benzamidine-binding positions include 180–182 (ESY) and Phe-225. 181-182 (SY) provides a ligand contact to histamine. Thr-227 is a binding site for 4-aminobutanoate. Position 227 (Thr-227) interacts with histamine. A helical transmembrane segment spans residues 247–267 (ILQTYMPSILITILSWVSFWI). Topologically, residues 268–271 (NYDA) are cytoplasmic. The chain crosses the membrane as a helical span at residues 272-292 (SAARVALGITTVLTMTTINTH). At 293–304 (LRETLPKIPYVK) the chain is on the extracellular side. A helical transmembrane segment spans residues 305 to 328 (AIDMYLMGCFVFVFLALLEYAFVN). Residues 329–447 (YIFFGRGPQR…KIPDLTDVNA (119 aa)) lie on the Cytoplasmic side of the membrane. Residues 448–470 (IDRWSRIVFPFTFSLFNLVYWLY) traverse the membrane as a helical segment. The Extracellular portion of the chain corresponds to 471 to 473 (YVN).

It belongs to the ligand-gated ion channel (TC 1.A.9) family. Gamma-aminobutyric acid receptor (TC 1.A.9.5) subfamily. GABRB3 sub-subfamily. In terms of assembly, heteropentamer, formed by a combination of alpha (GABRA1-6), beta (GABRB1-3), gamma (GABRG1-3), delta (GABRD), epsilon (GABRE), rho (GABRR1-3), pi (GABRP) and theta (GABRQ) chains, each subunit exhibiting distinct physiological and pharmacological properties. Can form functional homopentamers (in vitro). Interacts with UBQLN1. May interact with KIF21B. Identified in a complex of 720 kDa composed of LHFPL4, NLGN2, GABRA1, GABRB2, GABRG2 and GABRB3. Interacts with LHFPL4. Interacts with GIT1; this interaction is required for synaptic GABRB3 surface stability and inhibitory synapse strength.

Its subcellular location is the postsynaptic cell membrane. It localises to the cell membrane. The protein resides in the cytoplasmic vesicle membrane. The enzyme catalyses chloride(in) = chloride(out). Its activity is regulated as follows. Potentiated by histamine. Beta subunit of the heteropentameric ligand-gated chloride channel gated by gamma-aminobutyric acid (GABA), a major inhibitory neurotransmitter in the brain. GABA-gated chloride channels, also named GABA(A) receptors (GABAAR), consist of five subunits arranged around a central pore and contain GABA active binding site(s) located at the alpha and beta subunit interface(s). GABAARs containing beta-3/GABRB3 subunit are found at both synaptic and extrasynaptic sites. When activated by GABA, GABAARs selectively allow the flow of chloride anions across the cell membrane down their electrochemical gradient. Chloride influx into the postsynaptic neuron following GABAAR opening decreases the neuron ability to generate a new action potential, thereby reducing nerve transmission. GABAARs containing alpha-1 and beta-3 subunits exhibit synaptogenic activity; the gamma-2 subunit being necessary but not sufficient to induce rapid synaptic contacts formation. Extrasynaptic beta-3 receptors contribute to the tonic GABAergic inhibition. GABAARs containing alpha-1, beta-3 and epsilon subunits may also permit spontaneous chloride channel activity while preserving the structural information required for GABA-gated openings. Beta-containing GABAARs can simultaneously bind GABA and histamine where histamine binds at the interface of two neighboring beta subunits, which may be involved in the regulation of sleep and wakefulness. Plays an important role in somatosensation and in the production of antinociception. In Homo sapiens (Human), this protein is Gamma-aminobutyric acid receptor subunit beta-3.